A 161-amino-acid polypeptide reads, in one-letter code: Nucleotide-binding protein Rmet_2899 (161 aa).

Belongs to the YajQ family.

Its function is as follows. Nucleotide-binding protein. This Cupriavidus metallidurans (strain ATCC 43123 / DSM 2839 / NBRC 102507 / CH34) (Ralstonia metallidurans) protein is Nucleotide-binding protein Rmet_2899.